The chain runs to 154 residues: Endoribonuclease YbeY (154 aa).

Positions 113, 117, and 123 each coordinate Zn(2+).

It belongs to the endoribonuclease YbeY family. Zn(2+) serves as cofactor.

It is found in the cytoplasm. Functionally, single strand-specific metallo-endoribonuclease involved in late-stage 70S ribosome quality control and in maturation of the 3' terminus of the 16S rRNA. In Vibrio vulnificus (strain YJ016), this protein is Endoribonuclease YbeY.